Here is a 168-residue protein sequence, read N- to C-terminus: Ribonuclease H (168 aa).

An RNase H type-1 domain is found at 10–151; the sequence is NNIPVKIYTD…ADKLATNGKI (142 aa). D19, E57, D79, and D143 together coordinate Mg(2+).

Belongs to the RNase H family. Monomer. Mg(2+) serves as cofactor.

It localises to the cytoplasm. The catalysed reaction is Endonucleolytic cleavage to 5'-phosphomonoester.. Functionally, endonuclease that specifically degrades the RNA of RNA-DNA hybrids. The chain is Ribonuclease H from Orientia tsutsugamushi (strain Boryong) (Rickettsia tsutsugamushi).